The chain runs to 263 residues: uncharacterized protein (263 aa).

Residues 12–247 (LETQNLAIGY…ENLAKIYRTS (236 aa)) form the ABC transporter domain. 44–51 (GANGAGKS) provides a ligand contact to ATP.

Belongs to the ABC transporter superfamily.

This is an uncharacterized protein from Haemophilus influenzae (strain ATCC 51907 / DSM 11121 / KW20 / Rd).